The primary structure comprises 334 residues: Malate dehydrogenase, cytoplasmic (334 aa).

Serine 2 is subject to N-acetylserine. Residues 11–17 (GAAGQIA) and aspartate 42 each bind NAD(+). 2 residues coordinate substrate: arginine 92 and arginine 98. NAD(+) is bound at residue asparagine 105. At lysine 110 the chain carries N6-succinyllysine. Glutamine 112 is a binding site for NAD(+). Lysine 118 and lysine 121 each carry N6-acetyllysine. 129–131 (VGN) contributes to the NAD(+) binding site. Asparagine 131 and arginine 162 together coordinate substrate. Histidine 187 (proton acceptor) is an active-site residue. Lysine 214 is subject to N6-succinyllysine. A Phosphoserine modification is found at serine 217. Residue arginine 230 is modified to Omega-N-methylarginine. Serine 241 carries the phosphoserine modification. Residue lysine 298 is modified to N6-acetyllysine; alternate. Lysine 298 bears the N6-succinyllysine; alternate mark. A Phosphoserine modification is found at serine 309. Lysine 318 is subject to N6-succinyllysine. 2 positions are modified to phosphoserine: serine 332 and serine 333.

It belongs to the LDH/MDH superfamily. MDH type 2 family. In terms of assembly, homodimer. In terms of processing, ISGylated. Acetylation at Lys-118 dramatically enhances enzymatic activity and promotes adipogenic differentiation.

The protein localises to the cytoplasm. It is found in the cytosol. It carries out the reaction (S)-malate + NAD(+) = oxaloacetate + NADH + H(+). It catalyses the reaction (2R)-2-hydroxy-3-(4-hydroxyphenyl)propanoate + NAD(+) = 3-(4-hydroxyphenyl)pyruvate + NADH + H(+). The catalysed reaction is (S)-2-hydroxyglutarate + NAD(+) = 2-oxoglutarate + NADH + H(+). Functionally, catalyzes the reduction of aromatic alpha-keto acids in the presence of NADH. Plays essential roles in the malate-aspartate shuttle and the tricarboxylic acid cycle, important in mitochondrial NADH supply for oxidative phosphorylation. Catalyzes the reduction of 2-oxoglutarate to 2-hydroxyglutarate, leading to elevated reactive oxygen species (ROS). The sequence is that of Malate dehydrogenase, cytoplasmic (MDH1) from Felis catus (Cat).